Here is a 123-residue protein sequence, read N- to C-terminus: Small ribosomal subunit protein uS11 (123 aa).

Positions 1 to 22 (MAKKRKKKLSSPEGISHIHASA) are disordered.

The protein belongs to the universal ribosomal protein uS11 family. As to quaternary structure, part of the 30S ribosomal subunit. Interacts with proteins S7 and S18. Binds to IF-3.

Located on the platform of the 30S subunit, it bridges several disparate RNA helices of the 16S rRNA. Forms part of the Shine-Dalgarno cleft in the 70S ribosome. The protein is Small ribosomal subunit protein uS11 of Malacoplasma penetrans (strain HF-2) (Mycoplasma penetrans).